Reading from the N-terminus, the 514-residue chain is MEISWGRALWRNFLGQSPDWYKLALLIFLIINPLIFLVNPFIAGWLLVAEFIFTLAMALKCYPLLPGGLLAIEAVMIGMTSPSHVRAEVAANLEVLLLLMFMVAGIYFMKQLLLFIFTRLLLSIRSKALLSLSFCLAAAFLSAFLDALTVVAVVISVAVGFYGIYHRVASSRGEDNDILDDSHIDQHFKVILEQFRGFLRSLMMHAGVGTALGGVMTMVGEPQNLIIAKAAGWSFGDFFLRMSPITVPVLVCGLLTCLLVERMGWFGYGEKLPEKVRQVLQQYDDQSRLQRTRQDKVRLIVQALIGIWLVIALALHLAEVGLIGLSVIIMATSLTGVTDEHAIGKAFTESLPFTALLTVFFSIVAVIIDQSLFSPIIHFVLQASEHAQLTLFYLFNGLLSSISDNVFVGTIYINEAKAAMENGTISLNQFELLAAAINTGTNLPSVATPNGQAAFLFLLTSALAPLIRLSYGRMVWMALPYTIVLTCVGLLCVEFTLAPMTEWMTQQGWLATLS.

12 helical membrane-spanning segments follow: residues 23 to 43 (LALL…PFIA), 52 to 72 (IFTL…LLAI), 97 to 117 (LLLM…LFIF), 120 to 140 (LLLS…AAAF), 144 to 164 (FLDA…FYGI), 202 to 222 (LMMH…VGEP), 238 to 258 (FFLR…LTCL), 303 to 323 (ALIG…VGLI), 353 to 373 (FTAL…QSLF), 391 to 411 (LFYL…VGTI), 447 to 467 (ATPN…APLI), and 475 to 495 (VWMA…CVEF).

This sequence belongs to the NhaB Na(+)/H(+) (TC 2.A.34) antiporter family.

It is found in the cell inner membrane. The catalysed reaction is 2 Na(+)(in) + 3 H(+)(out) = 2 Na(+)(out) + 3 H(+)(in). Functionally, na(+)/H(+) antiporter that extrudes sodium in exchange for external protons. The sequence is that of Na(+)/H(+) antiporter NhaB from Escherichia fergusonii (strain ATCC 35469 / DSM 13698 / CCUG 18766 / IAM 14443 / JCM 21226 / LMG 7866 / NBRC 102419 / NCTC 12128 / CDC 0568-73).